A 557-amino-acid polypeptide reads, in one-letter code: Dihydroxy-acid dehydratase (557 aa).

Cys-50 is a binding site for [2Fe-2S] cluster. Asp-82 is a binding site for Mg(2+). Cys-123 is a [2Fe-2S] cluster binding site. Asp-124 and Lys-125 together coordinate Mg(2+). At Lys-125 the chain carries N6-carboxylysine. Cys-195 is a [2Fe-2S] cluster binding site. Glu-447 is a binding site for Mg(2+). Residue Ser-473 is the Proton acceptor of the active site.

It belongs to the IlvD/Edd family. Homodimer. Requires [2Fe-2S] cluster as cofactor. Mg(2+) serves as cofactor.

It carries out the reaction (2R)-2,3-dihydroxy-3-methylbutanoate = 3-methyl-2-oxobutanoate + H2O. The enzyme catalyses (2R,3R)-2,3-dihydroxy-3-methylpentanoate = (S)-3-methyl-2-oxopentanoate + H2O. It participates in amino-acid biosynthesis; L-isoleucine biosynthesis; L-isoleucine from 2-oxobutanoate: step 3/4. Its pathway is amino-acid biosynthesis; L-valine biosynthesis; L-valine from pyruvate: step 3/4. Functions in the biosynthesis of branched-chain amino acids. Catalyzes the dehydration of (2R,3R)-2,3-dihydroxy-3-methylpentanoate (2,3-dihydroxy-3-methylvalerate) into 2-oxo-3-methylpentanoate (2-oxo-3-methylvalerate) and of (2R)-2,3-dihydroxy-3-methylbutanoate (2,3-dihydroxyisovalerate) into 2-oxo-3-methylbutanoate (2-oxoisovalerate), the penultimate precursor to L-isoleucine and L-valine, respectively. The polypeptide is Dihydroxy-acid dehydratase (Burkholderia mallei (strain NCTC 10247)).